The sequence spans 252 residues: Protein AGAMOUS-LIKE 6 (252 aa).

An MADS-box domain is found at 1 to 61; the sequence is MGRGRVELKR…GKLYEFGSAG (61 aa). 2 consecutive short sequence motifs (nuclear localization signal) follow at residues 8–15 and 138–145; these read LKRIENKI and QRKTQIMM. In terms of domain architecture, K-box spans 85–175; that stretch reads TQSWYQEVSK…KIKVSLELSS (91 aa).

Restricted to flowers.

It is found in the nucleus. Its function is as follows. Probable transcription factor involved in fruit development. Key regulator of the transition between the state of 'ovary arrest' imposed towards anthesis and the fertilization-triggered fruit set. The polypeptide is Protein AGAMOUS-LIKE 6 (Solanum lycopersicum (Tomato)).